The chain runs to 133 residues: Fatty acid-binding protein, heart (133 aa).

A2 bears the N-acetylalanine mark. The residue at position 8 (T8) is a Phosphothreonine. At Y20 the chain carries Phosphotyrosine; by Tyr-kinases. S23 carries the post-translational modification Phosphoserine. T30 bears the Phosphothreonine mark. The residue at position 83 (S83) is a Phosphoserine. 127 to 129 (RTY) lines the (9Z)-octadecenoate pocket. Residue 127–129 (RTY) coordinates hexadecanoate. 127–129 (RTY) serves as a coordination point for octadecanoate.

Belongs to the calycin superfamily. Fatty-acid binding protein (FABP) family.

Its subcellular location is the cytoplasm. In terms of biological role, FABPs are thought to play a role in the intracellular transport of long-chain fatty acids and their acyl-CoA esters. FABPs are important elements related to the hibernating state in mammals. The protein is Fatty acid-binding protein, heart (FABP3) of Myotis lucifugus (Little brown bat).